The primary structure comprises 1054 residues: Leucine-rich repeats and immunoglobulin-like domains protein 2 (1054 aa).

An N-terminal signal peptide occupies residues 1–39 (MAAAPRGIWEQRRLGCGLGPLARLLILAQALRLLPAARA). Residues 40–74 (GLCPAPCACRLPLLDCSRRKLPAPSWRALSGPLPS) form the LRRNT domain. LRR repeat units lie at residues 75–96 (DISS…LESQ), 97–118 (TLQE…GEPT), 120–141 (NITL…AFEL), 144–165 (ALES…SFPR), 167–188 (SLKY…CFDN), 192–213 (SLLV…VFKL), 215–236 (HLQF…TFQG), 239–260 (SLRS…AFFG), 263–284 (NMEE…WLYG), 287–308 (MLQQ…AWEF), 311–332 (RLSE…AFVG), 335–356 (LLER…VFRF), 359–381 (NLQT…SEAF), 386–407 (SLTK…AFIG), and 410–431 (SLEY…AFSQ). Asparagine 90 carries N-linked (GlcNAc...) asparagine glycosylation. Asparagine 120 carries an N-linked (GlcNAc...) asparagine glycan. N-linked (GlcNAc...) asparagine glycosylation is found at asparagine 172 and asparagine 188. An N-linked (GlcNAc...) asparagine glycan is attached at asparagine 273. N-linked (GlcNAc...) asparagine glycosylation is found at asparagine 440, asparagine 467, asparagine 513, asparagine 570, and asparagine 588. One can recognise an LRRCT domain in the interval 442–493 (SSLLCDCHLKWLLQWLVDNNFHHSVNVSCAHPEWLAGQSILNVDLKDFVCDD). Ig-like C2-type domains are found at residues 497–596 (PQIR…AKLT), 601–690 (PSFL…ASLT), and 695–784 (PSFI…NVIS). The cysteines at positions 518 and 579 are disulfide-linked. An intrachain disulfide couples cysteine 622 to cysteine 674. N-linked (GlcNAc...) asparagine glycosylation is found at asparagine 686 and asparagine 727. Cysteine 716 and cysteine 765 are oxidised to a cystine. The helical transmembrane segment at 807 to 827 (IVIIVVVCCVVGTSLIWVIVI) threads the bilayer. Tyrosine 905 bears the Phosphotyrosine mark. Residue asparagine 1024 is glycosylated (N-linked (GlcNAc...) asparagine).

The protein resides in the cell membrane. It is found in the cytoplasm. This is Leucine-rich repeats and immunoglobulin-like domains protein 2 (Lrig2) from Mus musculus (Mouse).